The primary structure comprises 167 residues: NADH-quinone oxidoreductase subunit B 2 (167 aa).

[4Fe-4S] cluster is bound by residues Cys-38, Cys-39, Cys-103, and Cys-132.

This sequence belongs to the complex I 20 kDa subunit family. As to quaternary structure, NDH-1 is composed of 14 different subunits. Subunits NuoB, C, D, E, F, and G constitute the peripheral sector of the complex. Requires [4Fe-4S] cluster as cofactor.

It localises to the cell inner membrane. It carries out the reaction a quinone + NADH + 5 H(+)(in) = a quinol + NAD(+) + 4 H(+)(out). Its function is as follows. NDH-1 shuttles electrons from NADH, via FMN and iron-sulfur (Fe-S) centers, to quinones in the respiratory chain. The immediate electron acceptor for the enzyme in this species is believed to be ubiquinone. Couples the redox reaction to proton translocation (for every two electrons transferred, four hydrogen ions are translocated across the cytoplasmic membrane), and thus conserves the redox energy in a proton gradient. This chain is NADH-quinone oxidoreductase subunit B 2, found in Rhizobium meliloti (strain 1021) (Ensifer meliloti).